Reading from the N-terminus, the 361-residue chain is MTKHAAYSSEDVVAAVAAPAPAGRHFTSFQALKGAPLDCKKHAAVDLSASGAAVVGGGPWFESMKASSPRRAADAEHGDWMEKHPSALAQFEPLLAAAKGKQIVMFLDYDGTLSPIVEDPDRAVMSEEMREAVRRVAEHFPTAIVSGRCRDKVLNFVKLTELYYAGSHGMDIQGPAACRQPNHVQQAEAAAVHYQAASEFLPVIEEVFRTLTAKMESIAGARVEHNKYCLSVHFRCVREEEWNAVNEEVRSVLREYPNLKLTHGRKVLEIRPSIKWDKGKALEFLLKSLGYAGRNDVFPIYIGDDRTDEDAFKVLRNMGQGIGILVSKLPKETAASYSLSDPAEVKEFLRKLANKKGARQP.

The protein belongs to the trehalose phosphatase family. It depends on a divalent metal cation as a cofactor. In terms of tissue distribution, expressed in axillary inflorescence meristems.

It catalyses the reaction alpha,alpha-trehalose 6-phosphate + H2O = alpha,alpha-trehalose + phosphate. The protein operates within glycan biosynthesis; trehalose biosynthesis. Removes the phosphate from trehalose 6-phosphate to produce free trehalose. Is specific for trehalose 6-phosphate. Does not possess activity toward glucose, sucrose or fructose 6-phosphates. Regulates inflorescence branching. Required to establish the correct identity and determinacy of axillary meristems in both male and female inflorescences. May act through a sugar signal that moves into axillary meristems. Acts upstream of RA1. May have a transcriptional regulatory function. The polypeptide is Trehalose 6-phosphate phosphatase RA3 (Zea mays (Maize)).